A 102-amino-acid polypeptide reads, in one-letter code: Glutaredoxin-C14 (102 aa).

The region spanning 1-101 is the Glutaredoxin domain; that stretch reads MDKVMRMSSE…PLIKPYQSFH (101 aa). C21 and C24 form a disulfide bridge.

The protein belongs to the glutaredoxin family. CC-type subfamily.

The protein localises to the cytoplasm. Has a glutathione-disulfide oxidoreductase activity in the presence of NADPH and glutathione reductase. Reduces low molecular weight disulfides and proteins. This chain is Glutaredoxin-C14 (GRXC14), found in Arabidopsis thaliana (Mouse-ear cress).